A 252-amino-acid chain; its full sequence is 3-deoxy-manno-octulosonate cytidylyltransferase (252 aa).

The protein belongs to the KdsB family.

It is found in the cytoplasm. It catalyses the reaction 3-deoxy-alpha-D-manno-oct-2-ulosonate + CTP = CMP-3-deoxy-beta-D-manno-octulosonate + diphosphate. It participates in nucleotide-sugar biosynthesis; CMP-3-deoxy-D-manno-octulosonate biosynthesis; CMP-3-deoxy-D-manno-octulosonate from 3-deoxy-D-manno-octulosonate and CTP: step 1/1. It functions in the pathway bacterial outer membrane biogenesis; lipopolysaccharide biosynthesis. Functionally, activates KDO (a required 8-carbon sugar) for incorporation into bacterial lipopolysaccharide in Gram-negative bacteria. The polypeptide is 3-deoxy-manno-octulosonate cytidylyltransferase (Vibrio campbellii (strain ATCC BAA-1116)).